Reading from the N-terminus, the 181-residue chain is Protein Ves (181 aa).

It belongs to the Ves family.

This chain is Protein Ves, found in Cronobacter sakazakii (strain ATCC BAA-894) (Enterobacter sakazakii).